A 695-amino-acid chain; its full sequence is MPRIPSPPQAGLRARAARAFRLELTHPFRHDLLGVDQVADGFEFFTDRSVVAMRVNGELKDLATIVTTTDVVEPVTIYSPDGLAILRHSTAHVLAQAVQTVNPEAKLGIGPPIADGFYYDFDVAEPFTPEDLKALDKEMSRIQRAGQRFVRRVVTDEEARAELAGEPYKLELIGLKGSDAESAEVGGEESVEVGSGELTIYDNVDPKTGETIWKDLCRGPHLPNTRMIGNGWALTRVAAAYWRGSEKNPQLQRIYGTAWPSKDELRAYQTRMEEAAKRDHRKLGVELDLFSFPDEIGSGLAVFHPKGGIIRKEIEDYMRDRLIANGYEMVNTPHITKGHLFETSQHLNWYREGMFPPMHLDEERDAEGNVTRQGQDYYLKPMNCPMHNLIFRSRGRSYRELPLRLSEFGTVYRYEKSGTLSGLTRVRGLTQDDAHIYVTEEQIRDEFARQLQFVLETLRGYGLTDFYLELSTKDPEKYVGSDESWETATETLREVAVESGLELVDDPGGAAFYGPKISVQARDAIGRTWQLSTVQLDFNQPELFELEYNAADGTRKQPAMIHRALLGSIERFFAILLEHHAGAFPVWLAPTQVVGIPVADAYGPFLDDVIAQLRARGVRAEVDHSDDRMQKKIRTHTKAKVPFQLIVGEEDASAGTVSFRFRDGTQLNGVAVDEAIERIVASIQTHELVDTAWPA.

The region spanning 1-76 (MPRIPSPPQA…TTTDVVEPVT (76 aa)) is the TGS domain. A catalytic region spans residues 279–585 (DHRKLGVELD…LLEHHAGAFP (307 aa)). Zn(2+) contacts are provided by cysteine 384, histidine 435, and histidine 562.

The protein belongs to the class-II aminoacyl-tRNA synthetase family. In terms of assembly, homodimer. Zn(2+) serves as cofactor.

It is found in the cytoplasm. It catalyses the reaction tRNA(Thr) + L-threonine + ATP = L-threonyl-tRNA(Thr) + AMP + diphosphate + H(+). Its function is as follows. Catalyzes the attachment of threonine to tRNA(Thr) in a two-step reaction: L-threonine is first activated by ATP to form Thr-AMP and then transferred to the acceptor end of tRNA(Thr). Also edits incorrectly charged L-seryl-tRNA(Thr). The chain is Threonine--tRNA ligase from Leifsonia xyli subsp. xyli (strain CTCB07).